Reading from the N-terminus, the 793-residue chain is Putative potassium transporter 12 (793 aa).

The Cytoplasmic segment spans residues M1–S54. A helical membrane pass occupies residues L55–P75. The Extracellular portion of the chain corresponds to H76–A87. Residues L88–L108 traverse the membrane as a helical segment. Residues R109–L175 lie on the Cytoplasmic side of the membrane. Residues L176–I196 form a helical membrane-spanning segment. Topologically, residues S197–D215 are extracellular. Residues V216–T236 traverse the membrane as a helical segment. Residues D237–K238 lie on the Cytoplasmic side of the membrane. A helical membrane pass occupies residues V239–A259. Residues L260–S289 are Extracellular-facing. N-linked (GlcNAc...) asparagine glycosylation occurs at N266. The chain crosses the membrane as a helical span at residues W290–L310. Over C311–V315 the chain is Cytoplasmic. Residues L316–A338 traverse the membrane as a helical segment. The Extracellular segment spans residues A339–T359. A helical transmembrane segment spans residues I360–I380. At S381–Q411 the chain is on the cytoplasmic side. Residues I412–F432 form a helical membrane-spanning segment. The Extracellular segment spans residues K433–T444. N434 carries an N-linked (GlcNAc...) asparagine glycan. Residues A445–W465 form a helical membrane-spanning segment. Topologically, residues K466 to H468 are cytoplasmic. The helical transmembrane segment at W469 to A489 threads the bilayer. At C490–Q496 the chain is on the extracellular side. Residues G497 to F517 traverse the membrane as a helical segment. Topologically, residues C518–I793 are cytoplasmic.

The protein belongs to the HAK/KUP transporter (TC 2.A.72.3) family.

The protein localises to the membrane. In terms of biological role, high-affinity potassium transporter. The chain is Putative potassium transporter 12 (HAK12) from Oryza sativa subsp. japonica (Rice).